We begin with the raw amino-acid sequence, 808 residues long: Aminotransferase ALT4 (808 aa).

The protein belongs to the class-II pyridoxal-phosphate-dependent aminotransferase family. BioF subfamily. Pyridoxal 5'-phosphate is required as a cofactor.

Its pathway is mycotoxin biosynthesis. Its function is as follows. Aminotransferase; part of the gene cluster that mediates the biosynthesis of the host-selective toxins (HSTs) AAL-toxins, sphinganine-analog mycotoxins responsible for Alternaria stem canker on tomato by the tomato pathotype. The biosynthesis starts with the polyketide synthase ALT1-catalyzed C-16 carbon chain assembly from one starter acetyl-CoA unit with malonyl-CoA extender units. ALT1 also selectively transfers methyl groups at the first and the third cycle of chain elongation for AAL toxin. The C-16 polyketide chain is released from the enzyme by a nucleophilic attack of a carbanion, which is derived from R-carbon of glycin by decarboxylation, on the carbonyl carbon of polyketide acyl chain. This step is probably catalyzed by a pyridoxal 5'-phosphate-dependent aminoacyl transferase ALT4. The respective functions of the other enzymes encoded by the cluster have still to be elucidated. The sphingosine N-acyltransferase-like protein ALT7 seems not to act as a resistance/self-tolerance factor against the toxin in the toxin biosynthetic gene cluster, contrary to what is expected. The protein is Aminotransferase ALT4 of Alternaria alternata (Alternaria rot fungus).